We begin with the raw amino-acid sequence, 179 residues long: Pectinesterase inhibitor 5 (179 aa).

The N-terminal stretch at Met1–Ala25 is a signal peptide. Intrachain disulfides connect Cys35–Cys44 and Cys101–Cys141.

This sequence belongs to the PMEI family. In terms of tissue distribution, expressed in seeds, buds, and mature flowers.

Its subcellular location is the secreted. It localises to the extracellular space. The protein resides in the apoplast. In terms of biological role, pectin methylesterase (PME) inhibitor that targets PME from seeds and modulates PME activity and pectin methylesterification during seed germination. The chain is Pectinesterase inhibitor 5 from Arabidopsis thaliana (Mouse-ear cress).